Here is a 369-residue protein sequence, read N- to C-terminus: Biglycan (369 aa).

The N-terminal stretch at Met1–Ala16 is a signal peptide. Positions Leu17–Asn37 are excised as a propeptide. Residues Ser42 and Ser48 are each glycosylated (O-linked (Xyl...) (glycosaminoglycan) serine). Intrachain disulfides connect Cys64–Cys70 and Cys68–Cys77. 12 LRR repeats span residues Lys83–Ile103, Ser104–Ile127, Ser128–Leu151, Val152–Ile172, Arg173–Leu196, Glu197–Leu221, Thr222–Ile242, Gln243–Ile266, Arg267–Leu290, Ser291–Ile313, Thr314–Val343, and Pro344–Lys369. N-linked (GlcNAc...) asparagine glycosylation is found at Asn271 and Asn312. Cys322 and Cys355 are disulfide-bonded.

This sequence belongs to the small leucine-rich proteoglycan (SLRP) family. SLRP class I subfamily. In terms of assembly, homodimer. Forms a ternary complex with MFAP2 and ELN. The two attached glycosaminoglycan chains can be either chondroitin sulfate or dermatan sulfate.

Its subcellular location is the secreted. The protein localises to the extracellular space. It is found in the extracellular matrix. In terms of biological role, may be involved in collagen fiber assembly. The chain is Biglycan (BGN) from Canis lupus familiaris (Dog).